The primary structure comprises 37 residues: uncharacterized protein (37 aa).

The protein belongs to the poxviridae A56.5 protein family.

This is an uncharacterized protein from Vaccinia virus (strain Western Reserve) (VACV).